The sequence spans 194 residues: MINIEIIDFRNFAYGKQKKVDDEIYGGGSGMLLKIEPIDLALENTKGKRILLSPQGKPFTQDDALKLSKEENLTFICGRYEGFDERIRNLIDEEYSIGDYVLTGGELASMVIADSTIRLIPGVIKEESYKNDSFQNNLLDYPQYTRPATYKNMNVPEVLLNGNHKEIKQWREQKAYEKTLKNRPDLIERKNNAK.

S-adenosyl-L-methionine-binding positions include G78 and 97–102 (IGDYVL).

Belongs to the RNA methyltransferase TrmD family. In terms of assembly, homodimer.

It is found in the cytoplasm. It carries out the reaction guanosine(37) in tRNA + S-adenosyl-L-methionine = N(1)-methylguanosine(37) in tRNA + S-adenosyl-L-homocysteine + H(+). Specifically methylates guanosine-37 in various tRNAs. This is tRNA (guanine-N(1)-)-methyltransferase from Mycoplasma mobile (strain ATCC 43663 / 163K / NCTC 11711) (Mesomycoplasma mobile).